The primary structure comprises 141 residues: Nucleoside diphosphate kinase (141 aa).

Residues Lys11, Phe59, Arg87, Thr93, Arg104, and Asn114 each coordinate ATP. Residue His117 is the Pros-phosphohistidine intermediate of the active site.

The protein belongs to the NDK family. As to quaternary structure, homotetramer. The cofactor is Mg(2+).

Its subcellular location is the cytoplasm. The catalysed reaction is a 2'-deoxyribonucleoside 5'-diphosphate + ATP = a 2'-deoxyribonucleoside 5'-triphosphate + ADP. The enzyme catalyses a ribonucleoside 5'-diphosphate + ATP = a ribonucleoside 5'-triphosphate + ADP. In terms of biological role, major role in the synthesis of nucleoside triphosphates other than ATP. The ATP gamma phosphate is transferred to the NDP beta phosphate via a ping-pong mechanism, using a phosphorylated active-site intermediate. In Burkholderia multivorans (strain ATCC 17616 / 249), this protein is Nucleoside diphosphate kinase.